We begin with the raw amino-acid sequence, 155 residues long: MSRRGTAEEKTAKSDPIYRNRLVNMLVNRILKHGKKSLAYQILYRAMKNIQQKTETNPLSVLRQAIRGVTPDIAVKARRVGGSTHQVPVEIGSAQGKALAIRWLLGASRKRPGRNMAFKLSSELVDAAKGSGDAIRKKEETHRMAEANRAFAHFR.

Belongs to the universal ribosomal protein uS7 family. Part of the 30S ribosomal subunit.

The protein resides in the plastid. It is found in the chloroplast. One of the primary rRNA binding proteins, it binds directly to 16S rRNA where it nucleates assembly of the head domain of the 30S subunit. In Phaseolus vulgaris (Kidney bean), this protein is Small ribosomal subunit protein uS7cz/uS7cy (rps7-A).